A 319-amino-acid polypeptide reads, in one-letter code: ATP-dependent 6-phosphofructokinase (319 aa).

An ATP-binding site is contributed by G11. 21-25 (RAVVR) lines the ADP pocket. ATP is bound by residues 72–73 (RC) and 102–105 (GDGS). D103 contacts Mg(2+). 125–127 (TID) is a substrate binding site. D127 serves as the catalytic Proton acceptor. An ADP-binding site is contributed by R154. Residues R162 and 169–171 (MGR) each bind substrate. Residues 185 to 187 (GAE), R211, and 213 to 215 (KLH) contribute to the ADP site. Substrate-binding positions include E222, R243, and 249–252 (HIQR).

The protein belongs to the phosphofructokinase type A (PFKA) family. ATP-dependent PFK group I subfamily. Prokaryotic clade 'B1' sub-subfamily. As to quaternary structure, homotetramer. The cofactor is Mg(2+).

The protein localises to the cytoplasm. The enzyme catalyses beta-D-fructose 6-phosphate + ATP = beta-D-fructose 1,6-bisphosphate + ADP + H(+). Its pathway is carbohydrate degradation; glycolysis; D-glyceraldehyde 3-phosphate and glycerone phosphate from D-glucose: step 3/4. With respect to regulation, allosterically activated by ADP and other diphosphonucleosides, and allosterically inhibited by phosphoenolpyruvate. Functionally, catalyzes the phosphorylation of D-fructose 6-phosphate to fructose 1,6-bisphosphate by ATP, the first committing step of glycolysis. This is ATP-dependent 6-phosphofructokinase from Alkaliphilus metalliredigens (strain QYMF).